The following is a 277-amino-acid chain: 2-dehydro-3-deoxyphosphooctonate aldolase (277 aa).

The protein belongs to the KdsA family.

The protein localises to the cytoplasm. The catalysed reaction is D-arabinose 5-phosphate + phosphoenolpyruvate + H2O = 3-deoxy-alpha-D-manno-2-octulosonate-8-phosphate + phosphate. It functions in the pathway carbohydrate biosynthesis; 3-deoxy-D-manno-octulosonate biosynthesis; 3-deoxy-D-manno-octulosonate from D-ribulose 5-phosphate: step 2/3. Its pathway is bacterial outer membrane biogenesis; lipopolysaccharide biosynthesis. The protein is 2-dehydro-3-deoxyphosphooctonate aldolase of Brucella melitensis biotype 2 (strain ATCC 23457).